Reading from the N-terminus, the 478-residue chain is Serine hydroxymethyltransferase, cytosolic (478 aa).

N6-(pyridoxal phosphate)lysine is present on Lys-251.

It belongs to the SHMT family. As to quaternary structure, homotetramer. Identified in complex with FAM175B and the other subunits of the BRISC complex, at least composed of FAM175B/ABRO1, BRCC3/BRCC36, BABAM2 and BABAM1/NBA1. The cofactor is pyridoxal 5'-phosphate.

The protein resides in the cytoplasm. The enzyme catalyses (6R)-5,10-methylene-5,6,7,8-tetrahydrofolate + glycine + H2O = (6S)-5,6,7,8-tetrahydrofolate + L-serine. It functions in the pathway one-carbon metabolism; tetrahydrofolate interconversion. In terms of biological role, interconversion of serine and glycine. This is Serine hydroxymethyltransferase, cytosolic (Shmt1) from Mus musculus (Mouse).